We begin with the raw amino-acid sequence, 242 residues long: Universal stress protein PHOS32 (242 aa).

Residues 1–43 constitute a chloroplast transit peptide; that stretch reads MNPADSDHPQLPNIKIHHPPSPRHSHHHHSSSTPSSAATPTPT. A disordered region spans residues 1–45; the sequence is MNPADSDHPQLPNIKIHHPPSPRHSHHHHSSSTPSSAATPTPTAG. Residues 15–30 are compositionally biased toward basic residues; the sequence is KIHHPPSPRHSHHHHS. Residue proline 19 coordinates ATP. Phosphoserine; by MAPK3 and MAPK6 is present on serine 21. Residues 31–44 show a composition bias toward low complexity; sequence SSTPSSAATPTPTA. Residues valine 83, 168-178, and 186-188 each bind ATP; these read GSRGFGAEKKR and SVS. Serine 219 carries the post-translational modification Phosphoserine.

The protein belongs to the universal stress protein A family. Phosphorylated by MAPK3 and MAPK6 after pathogenic elicitation (e.g. bacterial flg22, Phytophthora infestans zoospores and xylanase).

The protein localises to the plastid. It is found in the chloroplast. This chain is Universal stress protein PHOS32, found in Arabidopsis thaliana (Mouse-ear cress).